Here is a 353-residue protein sequence, read N- to C-terminus: Photosystem II protein D1 (353 aa).

Position 2 is an N-acetylthreonine (Thr2). A Phosphothreonine modification is found at Thr2. 3 helical membrane-spanning segments follow: residues 29–46 (YIGW…TATS), 118–133 (HFLL…EWEL), and 142–156 (WIAV…AATA). A chlorophyll a-binding site is contributed by His118. A pheophytin a-binding site is contributed by Tyr126. The [CaMn4O5] cluster site is built by Asp170 and Glu189. Residues 197 to 218 (FHMLGVAGVFGGSLFSAMHGSL) form a helical membrane-spanning segment. Residue His198 participates in chlorophyll a binding. Residues His215 and 264 to 265 (SF) each bind a quinone. His215 serves as a coordination point for Fe cation. A Fe cation-binding site is contributed by His272. Residues 274–288 (FLAAWPVVGIWFTAL) traverse the membrane as a helical segment. 4 residues coordinate [CaMn4O5] cluster: His332, Glu333, Asp342, and Ala344. Positions 345–353 (AVEAPSTIG) are excised as a propeptide.

This sequence belongs to the reaction center PufL/M/PsbA/D family. PSII is composed of 1 copy each of membrane proteins PsbA, PsbB, PsbC, PsbD, PsbE, PsbF, PsbH, PsbI, PsbJ, PsbK, PsbL, PsbM, PsbT, PsbX, PsbY, PsbZ, Psb30/Ycf12, at least 3 peripheral proteins of the oxygen-evolving complex and a large number of cofactors. It forms dimeric complexes. It depends on The D1/D2 heterodimer binds P680, chlorophylls that are the primary electron donor of PSII, and subsequent electron acceptors. It shares a non-heme iron and each subunit binds pheophytin, quinone, additional chlorophylls, carotenoids and lipids. D1 provides most of the ligands for the Mn4-Ca-O5 cluster of the oxygen-evolving complex (OEC). There is also a Cl(-1) ion associated with D1 and D2, which is required for oxygen evolution. The PSII complex binds additional chlorophylls, carotenoids and specific lipids. as a cofactor. In terms of processing, tyr-161 forms a radical intermediate that is referred to as redox-active TyrZ, YZ or Y-Z. Post-translationally, C-terminally processed by CTPA; processing is essential to allow assembly of the oxygen-evolving complex and thus photosynthetic growth.

The protein resides in the plastid. The protein localises to the chloroplast thylakoid membrane. The enzyme catalyses 2 a plastoquinone + 4 hnu + 2 H2O = 2 a plastoquinol + O2. Functionally, photosystem II (PSII) is a light-driven water:plastoquinone oxidoreductase that uses light energy to abstract electrons from H(2)O, generating O(2) and a proton gradient subsequently used for ATP formation. It consists of a core antenna complex that captures photons, and an electron transfer chain that converts photonic excitation into a charge separation. The D1/D2 (PsbA/PsbD) reaction center heterodimer binds P680, the primary electron donor of PSII as well as several subsequent electron acceptors. The chain is Photosystem II protein D1 from Lemna minor (Common duckweed).